The primary structure comprises 334 residues: MLDDRAKLLLKALVERYIADGQPVGSRTLSQASGIDLSPATIRHVMADLEDLGLIASPHTSAGRRPTARGYRLFVDTMLTVQRDPLTAPELAPEQPQKVIANAAQLLSSLSQFVGVVIAPRRSSVFRHIEFLRLSERRFLVIIVSPEGDVQNRVIFTDIDYSQAQLIEASHFLNSHYTGLAMEQVRERLKSEVDMLRNEIAALMQAAVNVGSEALSDVQDEVVISGERNLLAVSDFSSDMDHLRRAFDLFEQKTQILRLLDISSQAQGVRIYIGGESQVVPFEELSVVSASYEVDGTMVGTLGVIGPTRMPYDRMIQIVDITSRLLSNALSHRK.

Belongs to the HrcA family.

Negative regulator of class I heat shock genes (grpE-dnaK-dnaJ and groELS operons). Prevents heat-shock induction of these operons. The chain is Heat-inducible transcription repressor HrcA from Verminephrobacter eiseniae (strain EF01-2).